The chain runs to 137 residues: Large ribosomal subunit protein uL16 (137 aa).

It belongs to the universal ribosomal protein uL16 family. Part of the 50S ribosomal subunit.

In terms of biological role, binds 23S rRNA and is also seen to make contacts with the A and possibly P site tRNAs. This is Large ribosomal subunit protein uL16 from Magnetococcus marinus (strain ATCC BAA-1437 / JCM 17883 / MC-1).